The primary structure comprises 186 residues: Transcriptional repressor NrdR (186 aa).

The segment at 3–34 (CPFCRHPDSRVVDSREAEEGAAIRRRRSCPAC) is a zinc-finger region. Residues 46–136 (LRVRKRSGAT…VYLAFESLGD (91 aa)) enclose the ATP-cone domain. The disordered stretch occupies residues 149 to 169 (AGGGEPPVAGKPTTMPAATGA).

This sequence belongs to the NrdR family. Zn(2+) is required as a cofactor.

In terms of biological role, negatively regulates transcription of bacterial ribonucleotide reductase nrd genes and operons by binding to NrdR-boxes. In Parafrankia sp. (strain EAN1pec), this protein is Transcriptional repressor NrdR.